The primary structure comprises 130 residues: Small ribosomal subunit protein uS8 (130 aa).

This sequence belongs to the universal ribosomal protein uS8 family. In terms of assembly, part of the 30S ribosomal subunit.

Functionally, one of the primary rRNA binding proteins, it binds directly to 16S rRNA central domain where it helps coordinate assembly of the platform of the 30S subunit. The protein is Small ribosomal subunit protein uS8 of Halobacterium salinarum (strain ATCC 29341 / DSM 671 / R1).